Reading from the N-terminus, the 96-residue chain is UPF0184 protein CG14818 (96 aa).

2 disordered regions span residues 1-28 (MSPK…LQEM) and 70-96 (IAEE…AAPK). Polar residues predominate over residues 8 to 21 (DPSSSGDSGNTNVQ). The stretch at 21-77 (QEADLQEMEDVNNSLDALSCALDAVEQRTDDIMSQLRELLNSNREIRRLIAEENDNA) forms a coiled coil. Over residues 72 to 85 (EENDNAPESGDDNM) the composition is skewed to acidic residues.

It belongs to the UPF0184 (EST00098) family.

In Drosophila melanogaster (Fruit fly), this protein is UPF0184 protein CG14818.